The chain runs to 108 residues: Translation initiation factor 1A (108 aa).

An S1-like domain is found at 10 to 84; that stretch reads IRVITPNKKS…EKGDIIYRYT (75 aa).

Belongs to the eIF-1A family.

In terms of biological role, seems to be required for maximal rate of protein biosynthesis. Enhances ribosome dissociation into subunits and stabilizes the binding of the initiator Met-tRNA(I) to 40 S ribosomal subunits. The polypeptide is Translation initiation factor 1A (Picrophilus torridus (strain ATCC 700027 / DSM 9790 / JCM 10055 / NBRC 100828 / KAW 2/3)).